We begin with the raw amino-acid sequence, 308 residues long: Probable 5-dehydro-4-deoxyglucarate dehydratase (308 aa).

It belongs to the DapA family.

The catalysed reaction is 5-dehydro-4-deoxy-D-glucarate + H(+) = 2,5-dioxopentanoate + CO2 + H2O. Its pathway is carbohydrate acid metabolism; D-glucarate degradation; 2,5-dioxopentanoate from D-glucarate: step 2/2. The chain is Probable 5-dehydro-4-deoxyglucarate dehydratase from Bacillus licheniformis (strain ATCC 14580 / DSM 13 / JCM 2505 / CCUG 7422 / NBRC 12200 / NCIMB 9375 / NCTC 10341 / NRRL NRS-1264 / Gibson 46).